The primary structure comprises 644 residues: Interleukin-23 receptor (644 aa).

The signal sequence occupies residues 1 to 23; it reads MSHLTLQLHVVIALYVLFRWCHG. At 24 to 374 the chain is on the extracellular side; the sequence is GITSINCSGD…PASGNHQDIG (351 aa). 3 N-linked (GlcNAc...) asparagine glycosylation sites follow: Asn-47, Asn-130, and Asn-232. Fibronectin type-III domains follow at residues 127 to 217 and 219 to 318; these read APSN…LDDI and IPSA…TSQE. Residues 375-395 form a helical membrane-spanning segment; that stretch reads LLSGMVFLAIMLPIFSLIGIF. Over 396 to 644 the chain is Cytoplasmic; it reads NRSLRIGIKR…HFSRISLFQK (249 aa).

Belongs to the type I cytokine receptor family. Type 2 subfamily. As to quaternary structure, heterodimer with IL12RB1. In presence of IL23, the heterodimer forms the IL23 receptor. Interacts with JAK2 and in presence of IL23 with STAT3. In terms of processing, phosphorylated in response to IL23. As to expression, expressed by Th1, Th2 and dendritic cells.

It localises to the cell membrane. Functionally, associates with IL12RB1 to form the interleukin-23 receptor. Binds IL23 and mediates T-cells, NK cells and possibly certain macrophage/myeloid cells stimulation probably through activation of the Jak-Stat signaling cascade. IL23 functions in innate and adaptive immunity and may participate in acute response to infection in peripheral tissues. IL23 may be responsible for autoimmune inflammatory diseases and be important for tumorigenesis. The protein is Interleukin-23 receptor (Il23r) of Mus musculus (Mouse).